A 217-amino-acid chain; its full sequence is Octanoyltransferase (217 aa).

A BPL/LPL catalytic domain is found at 32–207 (SDSPDELWIV…TLSQLLGYQQ (176 aa)). Substrate is bound by residues 71–78 (RGGQVTYH), 138–140 (SLG), and 151–153 (GLA). Catalysis depends on C169, which acts as the Acyl-thioester intermediate.

This sequence belongs to the LipB family.

Its subcellular location is the cytoplasm. The enzyme catalyses octanoyl-[ACP] + L-lysyl-[protein] = N(6)-octanoyl-L-lysyl-[protein] + holo-[ACP] + H(+). Its pathway is protein modification; protein lipoylation via endogenous pathway; protein N(6)-(lipoyl)lysine from octanoyl-[acyl-carrier-protein]: step 1/2. In terms of biological role, catalyzes the transfer of endogenously produced octanoic acid from octanoyl-acyl-carrier-protein onto the lipoyl domains of lipoate-dependent enzymes. Lipoyl-ACP can also act as a substrate although octanoyl-ACP is likely to be the physiological substrate. This chain is Octanoyltransferase, found in Shewanella sp. (strain MR-7).